The primary structure comprises 943 residues: UvrABC system protein A (943 aa).

31-38 (GLSGSGKS) is an ATP binding site. The C4-type zinc finger occupies 253–280 (CPHCGYSVPELEPRLFSFNNPAGACPTC). ABC transporter domains are found at residues 310 to 587 (WDRR…PNSI) and 607 to 937 (LDKK…RFLK). 640 to 647 (GVSGSGKS) serves as a coordination point for ATP. The segment at 740 to 766 (CEACQGDGVLKVEMHFLPDVYVPCDQC) adopts a C4-type zinc-finger fold.

The protein belongs to the ABC transporter superfamily. UvrA family. In terms of assembly, forms a heterotetramer with UvrB during the search for lesions.

It localises to the cytoplasm. Its function is as follows. The UvrABC repair system catalyzes the recognition and processing of DNA lesions. UvrA is an ATPase and a DNA-binding protein. A damage recognition complex composed of 2 UvrA and 2 UvrB subunits scans DNA for abnormalities. When the presence of a lesion has been verified by UvrB, the UvrA molecules dissociate. This is UvrABC system protein A from Haemophilus influenzae (strain ATCC 51907 / DSM 11121 / KW20 / Rd).